Reading from the N-terminus, the 323-residue chain is Cysteine synthase A (323 aa).

The hydrogen sulfide site is built by N8 and R35. K42 is subject to N6-(pyridoxal phosphate)lysine. Pyridoxal 5'-phosphate-binding positions include N72 and 177-181 (GTGGT). L269 is a hydrogen sulfide binding site. S273 lines the pyridoxal 5'-phosphate pocket.

It belongs to the cysteine synthase/cystathionine beta-synthase family. In terms of assembly, homodimer. Pyridoxal 5'-phosphate is required as a cofactor.

The catalysed reaction is O-acetyl-L-serine + hydrogen sulfide = L-cysteine + acetate. It participates in amino-acid biosynthesis; L-cysteine biosynthesis; L-cysteine from L-serine: step 2/2. In terms of biological role, two cysteine synthase enzymes are found. Both catalyze the same reaction. Cysteine synthase B can also use thiosulfate in place of sulfide to give cysteine thiosulfonate as a product. The sequence is that of Cysteine synthase A (cysK) from Salmonella typhi.